A 508-amino-acid polypeptide reads, in one-letter code: Photosystem II CP47 reaction center protein (508 aa).

Helical transmembrane passes span 21–36 (SVHI…WAGS), 101–115 (IMLS…IWHW), 140–156 (GIHL…FGAF), 203–218 (IAAG…FHLS), 237–252 (VLSS…AFVV), and 457–472 (SFAL…HGAR).

The protein belongs to the PsbB/PsbC family. PsbB subfamily. PSII is composed of 1 copy each of membrane proteins PsbA, PsbB, PsbC, PsbD, PsbE, PsbF, PsbH, PsbI, PsbJ, PsbK, PsbL, PsbM, PsbT, PsbX, PsbY, PsbZ, Psb30/Ycf12, at least 3 peripheral proteins of the oxygen-evolving complex and a large number of cofactors. It forms dimeric complexes. Binds multiple chlorophylls. PSII binds additional chlorophylls, carotenoids and specific lipids. serves as cofactor.

It is found in the plastid. The protein resides in the chloroplast thylakoid membrane. In terms of biological role, one of the components of the core complex of photosystem II (PSII). It binds chlorophyll and helps catalyze the primary light-induced photochemical processes of PSII. PSII is a light-driven water:plastoquinone oxidoreductase, using light energy to abstract electrons from H(2)O, generating O(2) and a proton gradient subsequently used for ATP formation. This Piper cenocladum (Ant piper) protein is Photosystem II CP47 reaction center protein.